Consider the following 229-residue polypeptide: Enolase-phosphatase E1 (229 aa).

Belongs to the HAD-like hydrolase superfamily. MasA/MtnC family. Monomer. Mg(2+) is required as a cofactor.

The catalysed reaction is 5-methylsulfanyl-2,3-dioxopentyl phosphate + H2O = 1,2-dihydroxy-5-(methylsulfanyl)pent-1-en-3-one + phosphate. It participates in amino-acid biosynthesis; L-methionine biosynthesis via salvage pathway; L-methionine from S-methyl-5-thio-alpha-D-ribose 1-phosphate: step 3/6. The protein operates within amino-acid biosynthesis; L-methionine biosynthesis via salvage pathway; L-methionine from S-methyl-5-thio-alpha-D-ribose 1-phosphate: step 4/6. Its function is as follows. Bifunctional enzyme that catalyzes the enolization of 2,3-diketo-5-methylthiopentyl-1-phosphate (DK-MTP-1-P) into the intermediate 2-hydroxy-3-keto-5-methylthiopentenyl-1-phosphate (HK-MTPenyl-1-P), which is then dephosphorylated to form the acireductone 1,2-dihydroxy-3-keto-5-methylthiopentene (DHK-MTPene). This is Enolase-phosphatase E1 from Yersinia pseudotuberculosis serotype IB (strain PB1/+).